A 3914-amino-acid chain; its full sequence is Trichosetin synthetase PKS-NRPS1 (3914 aa).

Positions 4–420 (NEPIAIIGSA…GTNAHAIIEA (417 aa)) constitute a Ketosynthase family 3 (KS3) domain. Active-site for beta-ketoacyl synthase activity residues include C177, H301, and H340. The segment at 525–847 (VLTGQGAQWP…REKDDIQQFA (323 aa)) is malonyl-CoA:ACP transacylase (MAT) domain. The segment at 913 to 1047 (HPILGRRCHD…AHVKASLSVP (135 aa)) is N-terminal hotdog fold. The interval 913 to 1214 (HPILGRRCHD…MELVPFSPAT (302 aa)) is dehydratase (DH) domain. Residues 913–1216 (HPILGRRCHD…LVPFSPATPE (304 aa)) enclose the PKS/mFAS DH domain. Catalysis depends on H946, which acts as the Proton acceptor; for dehydratase activity. The segment at 1062 to 1216 (LRKVEVDRFY…LVPFSPATPE (155 aa)) is C-terminal hotdog fold. D1122 functions as the Proton donor; for dehydratase activity in the catalytic mechanism. The methyltransferase (MT) domain stretch occupies residues 1364 to 1593 (EGFGLDLVNK…DLPETKSTEL (230 aa)). The ketoreductase (KR) domain stretch occupies residues 2083–2255 (TFLLIGLSGE…VAASSIDISS (173 aa)). One can recognise a Carrier 1 domain in the interval 2356–2436 (LADVKTKADA…DLIEESLNLI (81 aa)). S2396 is subject to O-(pantetheine 4'-phosphoryl)serine. Residues 2447 to 2518 (EAGSTPTTQP…DSTDNSTPLK (72 aa)) are disordered. Residues 2481–2500 (QQTGSDSSRSPIDTPLTSME) are compositionally biased toward polar residues. Positions 2529 to 2956 (SYGQAGFWFL…VQGTNKAADT (428 aa)) are condensation (C) domain. The adenylation (A) (KR) domain stretch occupies residues 2991 to 3388 (QTIQANSTKV…LLFCDGRLED (398 aa)). The Carrier 2 domain maps to 3502–3579 (GTLTVAEQRL…TMAVVLESCG (78 aa)). O-(pantetheine 4'-phosphoryl)serine is present on S3539. Positions 3615-3831 (LTGSAGYLGR…VLPTGDIVKA (217 aa)) are reductase (RED) domain.

It in the C-terminal section; belongs to the NRP synthetase family.

The catalysed reaction is L-serine + 7 malonyl-CoA + acetyl-CoA + 2 S-adenosyl-L-methionine + ATP + 8 NADPH + 11 H(+) = (5S)-3-[(2E,6R,8E,10E,12E)-2,6-dimethyltetradeca-2,8,10,12-tetraenoyl]-5-(hydroxymethyl)pyrrolidine-2,4-dione + AMP + 2 S-adenosyl-L-homocysteine + 7 CO2 + diphosphate + 8 NADP(+) + 8 CoA + 6 H2O. It functions in the pathway mycotoxin biosynthesis. Hybrid PKS-NRPS synthetase; part of the gene cluster that mediates the biosynthesis of trichosetin, a trans-fused decalin-containing tetramic acid with antimicrobial activity. The PKS module of PKS-NRPS1 together with the enoylreductase (ER) catalyze the formation of the polyketide unit which is then conjugated to L-serine by the condensation domain of the PKS-NRPS1 NRPS module. Activity of the Dieckmann cyclase domain (RED) results in release of the Dieckmann product intermediate. Diels-Alderase (DA) is involved in endo-selective Diels-Alder cycloaddition to form the decalin ring, leading to the production of N-desmethylequisetin also called trichosetin. The cluster does not contain the equisetin N-methyltransferase and consequently, trichosetin is isolated as final product. The polypeptide is Trichosetin synthetase PKS-NRPS1 (Gibberella fujikuroi (strain CBS 195.34 / IMI 58289 / NRRL A-6831) (Bakanae and foot rot disease fungus)).